The sequence spans 550 residues: NAD(P)H-quinone oxidoreductase chain 4 3 (550 aa).

14 helical membrane passes run 5 to 25 (FPWLTAIIALPALSTLLIPLL), 36 to 56 (YALIVGLVDFALMCFAFWQHF), 86 to 106 (ISAPLVLLAGFVTTLAMFSAW), 114 to 134 (LFYALMLLLYSAQIGVFVAKD), 135 to 155 (LFLFFLMWEIELIPVYLLVCI), 168 to 188 (FLLYTAAASIFILVAALALSL), 212 to 232 (MWLYAGLLVSFGVKLAIFPLH), 243 to 263 (SSPVSMLLAGVLLKMGGYGLM), 277 to 297 (FAPLLVILGVVNIVYGAFSSF), 311 to 331 (VSHMGFVLIGIASFTDLGING), 332 to 352 (AMLQMLSHGLIASVLFFLAGV), 375 to 395 (VFAMFTVGALASLALPGMSGF), 418 to 438 (ITVFLAAVGVILTPIYLLSML), and 489 to 509 (IFIATCFTVLIIGVGLYPKLL).

The protein belongs to the complex I subunit 4 family.

It localises to the cellular thylakoid membrane. It carries out the reaction a plastoquinone + NADH + (n+1) H(+)(in) = a plastoquinol + NAD(+) + n H(+)(out). The enzyme catalyses a plastoquinone + NADPH + (n+1) H(+)(in) = a plastoquinol + NADP(+) + n H(+)(out). Its function is as follows. NDH-1 shuttles electrons from NAD(P)H, via FMN and iron-sulfur (Fe-S) centers, to quinones in the respiratory chain. The immediate electron acceptor for the enzyme in this species is believed to be plastoquinone. Couples the redox reaction to proton translocation (for every two electrons transferred, four hydrogen ions are translocated across the cytoplasmic membrane), and thus conserves the redox energy in a proton gradient. The sequence is that of NAD(P)H-quinone oxidoreductase chain 4 3 from Picosynechococcus sp. (strain ATCC 27264 / PCC 7002 / PR-6) (Agmenellum quadruplicatum).